Consider the following 180-residue polypeptide: Telokin-like protein 20 (180 aa).

Residues 112-180 (SKTDAAVHTS…KQKLDNAKQD (69 aa)) are disordered. Over residues 156-165 (DFEENIDDGD) the composition is skewed to acidic residues.

In Lepidoptera (butterflies and moths), this protein is Telokin-like protein 20 (TLP20).